The primary structure comprises 581 residues: MDTIKSFKGYGKVNELEQQAYEKKTRKRLIIIAVSSIVLIAVIIAAVAGVVIHNRNSESSPSSDSVPQTELSPAASLKAVCDTTRYPSSCFSSISSLPESNTTDPELLFKLSLRVAIDELSSFPSKLRANAEQDARLQKAIDVCSSVFGDALDRLNDSISALGTVAGRIASSASVSNVETWLSAALTDQDTCLDAVGELNSTAARGALQEIETAMRNSTEFASNSLAIVTKILGLLSRFETPIHHRRLLGFPEWLGAAERRLLEEKNNDSTPDAVVAKDGSGQFKTIGEALKLVKKKSEERFSVYVKEGRYVENIDLDKNTWNVMIYGDGKDKTFVVGSRNFMDGTPTFETATFAVKGKGFIAKDIGFVNNAGASKHQAVALRSGSDRSVFFRCSFDGFQDTLYAHSNRQFYRDCDITGTIDFIFGNAAVVFQSCKIMPRQPLPNQFNTITAQGKKDPNQNTGIIIQKSTITPFGNNLTAPTYLGRPWKDFSTTVIMQSDIGALLNPVGWMSWVPNVEPPTTIFYAEYQNSGPGADVSQRVKWAGYKPTITDRNAEEFTVQSFIQGPEWLPNAAVQFDSTL.

An N-terminal signal peptide occupies residues 1–55; the sequence is MDTIKSFKGYGKVNELEQQAYEKKTRKRLIIIAVSSIVLIAVIIAAVAGVVIHNR. 5 N-linked (GlcNAc...) asparagine glycosylation sites follow: N101, N156, N200, N217, and N268. Positions 348 and 378 each coordinate substrate. D401 serves as the catalytic Proton donor. An intrachain disulfide couples C415 to C435. The active-site Nucleophile is D422. An N-linked (GlcNAc...) asparagine glycan is attached at N477. Substrate contacts are provided by R486 and W488.

The protein in the N-terminal section; belongs to the PMEI family. This sequence in the C-terminal section; belongs to the pectinesterase family.

The protein resides in the secreted. It is found in the cell wall. The catalysed reaction is [(1-&gt;4)-alpha-D-galacturonosyl methyl ester](n) + n H2O = [(1-&gt;4)-alpha-D-galacturonosyl](n) + n methanol + n H(+). It functions in the pathway glycan metabolism; pectin degradation; 2-dehydro-3-deoxy-D-gluconate from pectin: step 1/5. Functionally, may have roles in the deposition of pectin in developing tissues and in the wall loosening and cell separation that occurs in cell expansion, fruit ripening and abscission. The polypeptide is Pectinesterase 3 (MPE3) (Phaseolus vulgaris (Kidney bean)).